The chain runs to 168 residues: S-ribosylhomocysteine lyase (168 aa).

The Fe cation site is built by His54, His58, and Cys128.

The protein belongs to the LuxS family. Homodimer. The cofactor is Fe cation.

It catalyses the reaction S-(5-deoxy-D-ribos-5-yl)-L-homocysteine = (S)-4,5-dihydroxypentane-2,3-dione + L-homocysteine. Functionally, involved in the synthesis of autoinducer 2 (AI-2) which is secreted by bacteria and is used to communicate both the cell density and the metabolic potential of the environment. The regulation of gene expression in response to changes in cell density is called quorum sensing. Catalyzes the transformation of S-ribosylhomocysteine (RHC) to homocysteine (HC) and 4,5-dihydroxy-2,3-pentadione (DPD). This Histophilus somni (strain 2336) (Haemophilus somnus) protein is S-ribosylhomocysteine lyase.